The chain runs to 117 residues: Large ribosomal subunit protein bL20c (117 aa).

This sequence belongs to the bacterial ribosomal protein bL20 family.

It localises to the plastid. It is found in the chloroplast. Its function is as follows. Binds directly to 23S ribosomal RNA and is necessary for the in vitro assembly process of the 50S ribosomal subunit. It is not involved in the protein synthesizing functions of that subunit. This chain is Large ribosomal subunit protein bL20c, found in Lobularia maritima (Sweet alyssum).